A 537-amino-acid polypeptide reads, in one-letter code: DELLA protein GAI (537 aa).

The disordered stretch occupies residues 1–33 (MKRDHQEISGSGSNPAESSSIKGKLWEEDPDAG). Residues 9 to 20 (SGSGSNPAESSS) are compositionally biased toward low complexity. Residues 37–41 (DELLA) carry the DELLA motif motif. Positions 131–157 (KSDPGLEITRKRAKTESSSSSSSTTTR) are disordered. Positions 147 to 156 (SSSSSSSTTT) are enriched in low complexity. The GRAS domain maps to 162-533 (IDSQEAGVRL…RPLIAHLGLA (372 aa)). The leucine repeat I (LRI) stretch occupies residues 169–223 (VRLVHTLMACAEAVQQDNLKLADALVKHIGLLASSQTGAMRKVATYFAEALARRI). The segment at 241-306 (QIPFYETCPY…GGPPAFRLTG (66 aa)) is VHIID. A VHIID motif is present at residues 272-276 (VHVID). Positions 320–352 (QVGWKLAQLAERIGIEFEFRGFVANSLADLEPE) are leucine repeat II (LRII). Residues 364–454 (VAVNAVFELH…ELYLGRQICN (91 aa)) form a PFYRE region. The short motif at 372–376 (LHPLL) is the LXXLL motif element. The interval 457 to 533 (ACEGMDRVER…RPLIAHLGLA (77 aa)) is SAW.

This sequence belongs to the GRAS family. DELLA subfamily. Post-translationally, phosphorylated. Ubiquitinated. Upon GA application it is ubiquitinated, leading to its subsequent degradation.

The protein resides in the nucleus. In terms of biological role, probable transcriptional regulator that acts as a repressor of the gibberellin (GA) signaling pathway. Probably acts by participating in large multiprotein complexes that represses transcription of GA-inducible genes. Upon GA application, it is degraded by the proteasome, allowing the GA signaling pathway. The chain is DELLA protein GAI (GAI) from Gossypium hirsutum (Upland cotton).